The following is a 132-amino-acid chain: Large ribosomal subunit protein uL14 (132 aa).

Belongs to the universal ribosomal protein uL14 family. Part of the 50S ribosomal subunit. Forms a cluster with proteins L3 and L24e, part of which may contact the 16S rRNA in 2 intersubunit bridges.

Binds to 23S rRNA. Forms part of two intersubunit bridges in the 70S ribosome. The polypeptide is Large ribosomal subunit protein uL14 (Methanosarcina mazei (strain ATCC BAA-159 / DSM 3647 / Goe1 / Go1 / JCM 11833 / OCM 88) (Methanosarcina frisia)).